We begin with the raw amino-acid sequence, 798 residues long: Integrin beta-1 (798 aa).

The signal sequence occupies residues 1-20 (MNLQLIFWIGLISSVCCVFG). At 21-728 (QADENRCLKA…ETPECPTGPD (708 aa)) the chain is on the extracellular side. A PSI domain is found at 26–76 (RCLKANAKSCGECIQAGPNCGWCTNSTFLQEGMPTSARCDDLEALKKKGCH). 28 cysteine pairs are disulfide-bonded: C27/C45, C35/C464, C38/C64, C48/C75, C207/C213, C261/C301, C401/C415, C435/C462, C466/C486, C477/C489, C491/C500, C502/C533, C516/C531, C525/C536, C538/C553, C555/C576, C560/C574, C568/C579, C581/C590, C592/C615, C599/C613, C607/C618, C620/C630, C633/C636, C640/C691, C646/C665, C649/C661, and C699/C723. N50 carries an N-linked (GlcNAc...) asparagine glycan. A compositionally biased stretch (basic and acidic residues) spans 75 to 91 (CHPNDIENPRGSKDIKK). The interval 75-105 (CHPNDIENPRGSKDIKKNKNVTNRSKGTAEK) is disordered. N-linked (GlcNAc...) asparagine glycans are attached at residues N94 and N97. One can recognise a VWFA domain in the interval 140-378 (DYPIDLYYLM…QLIIDAYNSL (239 aa)). Residues S152 and S154 each coordinate Mg(2+). S154, D157, D158, and E189 together coordinate Ca(2+). The tract at residues 207 to 213 (CTNEQNC) is CX3CL1-binding. The N-linked (GlcNAc...) asparagine glycan is linked to N212. Positions 244, 246, 248, and 249 each coordinate Ca(2+). Residue E249 participates in Mg(2+) binding. N269 carries an N-linked (GlcNAc...) asparagine glycan. Positions 295 to 314 (LPNDGQCHLENDVYTMSHYY) are CX3CL1-binding. A362 serves as a coordination point for Ca(2+). N363, N406, and N417 each carry an N-linked (GlcNAc...) asparagine glycan. The tract at residues 383 to 465 (ILENSKLPEG…IILQFICECE (83 aa)) is interaction with TMEM182. I-EGF domains are found at residues 466–501 (CQGE…RHCE), 502–554 (CSTD…KFCE), 555–591 (CDNF…SACD), and 592–631 (CSLD…PTCE). N-linked (GlcNAc...) asparagine glycosylation is present at N481. N520 is a glycosylation site (N-linked (GlcNAc...) asparagine). N584 carries an N-linked (GlcNAc...) asparagine glycan. An N-linked (GlcNAc...) asparagine glycan is attached at N669. The chain crosses the membrane as a helical span at residues 729 to 749 (IIPIVAGVVAGIVLIGLALLL). Residues 750–798 (IWKLLMIIHDRREFAKFEKEKMNAKWDTGENPIYKSAVTTVVNPKYEGK) are Cytoplasmic-facing. The signal for sorting from recycling endosomes; interaction with ACAP1 stretch occupies residues 762 to 767 (EFAKFE). T777 is modified (phosphothreonine). At Y783 the chain carries Phosphotyrosine. S785 carries the post-translational modification Phosphoserine. The interaction with ITGB1BP1 stretch occupies residues 785 to 792 (SAVTTVVN). T789 is subject to Phosphothreonine. K794 carries the N6-acetyllysine; alternate modification. K794 participates in a covalent cross-link: Glycyl lysine isopeptide (Lys-Gly) (interchain with G-Cter in SUMO1); alternate.

This sequence belongs to the integrin beta chain family. In terms of assembly, interacts with seprase FAP (seprase); the interaction occurs at the cell surface of invadopodia membrane in a collagen-dependent manner. Heterodimer of an alpha and a beta subunit. Beta-1 associates with either alpha-1, alpha-2, alpha-3, alpha-4, alpha-5, alpha-6, alpha-7, alpha-8, alpha-9, alpha-10, alpha-11 or alpha-V. ITGA6:ITGB1 is found in a complex with CD9; interaction takes place in oocytes and is involved in sperm-egg fusion. Binds LGALS3BP and NMRK2, when associated with alpha-7, but not with alpha-5. Interacts with FLNB, FLNC and RANBP9. Interacts with KRT1 in the presence of RACK1 and SRC. Interacts with JAML; integrin alpha-4/beta-1 may regulate leukocyte to endothelial cells adhesion by controlling JAML homodimerization. Interacts with RAB21. Interacts (via the cytoplasmic region) with RAB25 (via the hypervariable C-terminal region). Interacts with MYO10. Interacts with ITGB1BP1 (via C-terminal region); the interaction is a prerequisite for focal adhesion disassembly. Interacts with TLN1; the interaction is prevented by competitive binding of ITGB1BP1. Interacts with ACAP1; required for ITGB1 recycling. Interacts with ASAP3. Interacts with FERMT2; the interaction is inhibited in presence of ITGB1BP1. Interacts with DAB2. Interacts with FGR and HCK. Interacts with EMP2; the interaction may be direct or indirect and ITGB1 has a heterodimer form. ITGA5:ITGB1 interacts with CCN3. ITGA4:ITGB1 is found in a ternary complex with CX3CR1 and CX3CL1. ITGA5:ITGB1 interacts with FBN1. ITGA5:ITGB1 interacts with IL1B. Interacts with MDK. ITGA4:ITGB1 interacts with MDK; this interaction mediates MDK-induced osteoblast cells migration through PXN phosphorylation. ITGA6:ITGB1 interacts with MDK; this interaction mediates MDK-induced neurite-outgrowth. ITGA5:ITGB1 interacts with ACE2. Interacts with TMEM182 and LAMB1. Interacts with tensin TNS3; TNS3 also interacts with PEAK1, thus acting as an adapter molecule to bridge the association of PEAK1 with ITGB1. Interacts with tensin TNS4; the interaction displaces tensin TNS3 from the ITGB1 cytoplasmic tail and promotes ITGB1 stability. Integrin ITGA9:ITGB1 interacts with SPP1/OPN (via N-terminus). Integrin ITGA9:ITGB1 interacts with TNC/TNFN3 (via the 3rd Fibronectin type-III domain). Integrins ITGA4:ITGB1 and ITGA9:ITGB1 interact with SVEP1 (via Sushi domain 21); thereby inhibit Ca(2+) intracellular signaling and as a result repress vasocontraction. ITGA4:ITGB1 and ITGA5:ITGB1 interacts with SELP. Interacts with CD248. ITGA5:ITGB1 interacts with IGFBP1. ITGA4:ITGB1 interacts with BCAM. Interacts with ADGRG6. Interacts with the C-terminal region of FLNC. Interacts with filamin FLNA isoform 3/VAR-1. As to quaternary structure, interacts with ACE2. Interacts with alpha-7B in cardiomyocytes of adult heart and alpha-7A and alpha-7B in adult skeletal muscle. Interacts with filamin FLNA isoform 3/VAR-1.

The protein localises to the cell membrane. The protein resides in the cell projection. It localises to the invadopodium membrane. Its subcellular location is the ruffle membrane. It is found in the recycling endosome. The protein localises to the melanosome. The protein resides in the lamellipodium. It localises to the ruffle. Its subcellular location is the cell junction. It is found in the focal adhesion. The protein localises to the sarcolemma. Integrins alpha-1/beta-1, alpha-2/beta-1, alpha-10/beta-1 and alpha-11/beta-1 are receptors for collagen. Integrins alpha-1/beta-1 and alpha-2/beta-2 recognize the proline-hydroxylated sequence G-F-P-G-E-R in collagen. Integrins alpha-2/beta-1, alpha-3/beta-1, alpha-4/beta-1, alpha-5/beta-1, alpha-8/beta-1, alpha-10/beta-1, alpha-11/beta-1 and alpha-V/beta-1 are receptors for fibronectin. Alpha-4/beta-1 recognizes one or more domains within the alternatively spliced CS-1 and CS-5 regions of fibronectin. Integrin alpha-5/beta-1 is a receptor for fibrinogen. Integrin alpha-1/beta-1, alpha-2/beta-1, alpha-6/beta-1 and alpha-7/beta-1 are receptors for lamimin. Integrin alpha-6/beta-1 (ITGA6:ITGB1) is present in oocytes and is involved in sperm-egg fusion. Integrin alpha-4/beta-1 is a receptor for VCAM1 and recognizes the sequence Q-I-D-S in VCAM1. Integrin alpha-9/beta-1 is a receptor for VCAM1, cytotactin and osteopontin. It recognizes the sequence A-E-I-D-G-I-E-L in cytotactin. Integrin alpha-3/beta-1 is a receptor for epiligrin, thrombospondin and CSPG4. Integrin alpha-3/beta-1 provides a docking site for FAP (seprase) at invadopodia plasma membranes in a collagen-dependent manner and hence may participate in the adhesion, formation of invadopodia and matrix degradation processes, promoting cell invasion. Alpha-3/beta-1 may mediate with LGALS3 the stimulation by CSPG4 of endothelial cells migration. Integrin alpha-V/beta-1 is a receptor for vitronectin. Beta-1 integrins recognize the sequence R-G-D in a wide array of ligands. When associated with alpha-7/beta-1 integrin, regulates cell adhesion and laminin matrix deposition. Involved in promoting endothelial cell motility and angiogenesis. Involved in osteoblast compaction through the fibronectin fibrillogenesis cell-mediated matrix assembly process and the formation of mineralized bone nodules. May be involved in up-regulation of the activity of kinases such as PKC via binding to KRT1. Together with KRT1 and RACK1, serves as a platform for SRC activation or inactivation. Plays a mechanistic adhesive role during telophase, required for the successful completion of cytokinesis. ITGA4:ITGB1 binds to fractalkine (CX3CL1) and may act as its coreceptor in CX3CR1-dependent fractalkine signaling. ITGA4:ITGB1 and ITGA5:ITGB1 bind to PLA2G2A via a site (site 2) which is distinct from the classical ligand-binding site (site 1) and this induces integrin conformational changes and enhanced ligand binding to site 1. ITGA5:ITGB1 acts as a receptor for fibrillin-1 (FBN1) and mediates R-G-D-dependent cell adhesion to FBN1. ITGA5:ITGB1 acts as a receptor for fibronectin FN1 and mediates R-G-D-dependent cell adhesion to FN1. ITGA5:ITGB1 is a receptor for IL1B and binding is essential for IL1B signaling. ITGA5:ITGB3 is a receptor for soluble CD40LG and is required for CD40/CD40LG signaling. Plays an important role in myoblast differentiation and fusion during skeletal myogenesis. ITGA9:ITGB1 may play a crucial role in SVEP1/polydom-mediated myoblast cell adhesion. Integrins ITGA9:ITGB1 and ITGA4:ITGB1 repress PRKCA-mediated L-type voltage-gated channel Ca(2+) influx and ROCK-mediated calcium sensitivity in vascular smooth muscle cells via their interaction with SVEP1, thereby inhibit vasocontraction. The protein is Integrin beta-1 (ITGB1) of Bos taurus (Bovine).